The following is a 643-amino-acid chain: Phosphomethylpyrimidine synthase (643 aa).

Residues Asn248, Met277, Tyr306, His342, 362-364 (SRG), 403-406 (DGLR), and Glu442 each bind substrate. A Zn(2+)-binding site is contributed by His446. A substrate-binding site is contributed by Tyr469. His510 serves as a coordination point for Zn(2+). [4Fe-4S] cluster-binding residues include Cys590, Cys593, and Cys598.

It belongs to the ThiC family. In terms of assembly, homodimer. [4Fe-4S] cluster serves as cofactor.

The enzyme catalyses 5-amino-1-(5-phospho-beta-D-ribosyl)imidazole + S-adenosyl-L-methionine = 4-amino-2-methyl-5-(phosphooxymethyl)pyrimidine + CO + 5'-deoxyadenosine + formate + L-methionine + 3 H(+). The protein operates within cofactor biosynthesis; thiamine diphosphate biosynthesis. Functionally, catalyzes the synthesis of the hydroxymethylpyrimidine phosphate (HMP-P) moiety of thiamine from aminoimidazole ribotide (AIR) in a radical S-adenosyl-L-methionine (SAM)-dependent reaction. This Burkholderia lata (strain ATCC 17760 / DSM 23089 / LMG 22485 / NCIMB 9086 / R18194 / 383) protein is Phosphomethylpyrimidine synthase.